We begin with the raw amino-acid sequence, 1121 residues long: Pleckstrin homology domain-containing family A member 7 (1121 aa).

WW domains lie at 9–42 (DTLP…HPRT) and 54–87 (SDLP…HPVT). The interval 105-137 (PHMSKQDRNQRPSSMVSETSTAGTASTLEAKPG) is disordered. Residues 115 to 131 (RPSSMVSETSTAGTAST) show a composition bias toward polar residues. Residues 164–282 (PVVVRGWLHK…WVRAMNQAAQ (119 aa)) enclose the PH domain. The tract at residues 299–514 (QAVPQANHTE…LKMSSEERRA (216 aa)) is disordered. Basic and acidic residues-rich tracts occupy residues 308–356 (ESCH…EGKR) and 437–446 (HWARAQKGDS). Residues 460–475 (PGQSLSFPENYQTLPK) are compositionally biased toward polar residues. Over residues 497–514 (YAQDRASHLKMSSEERRA) the composition is skewed to basic and acidic residues. Phosphoserine occurs at positions 536, 545, 569, 604, 608, and 612. Positions 538 to 696 (TAPICLGSPE…AESDTDVKLS (159 aa)) are interaction with CTNND1. Residues 547–632 (EFTDQGRSRS…NSSHVDRRSM (86 aa)) form a disordered region. The span at 567–582 (PPSPSDIPPPGPPRVF) shows a compositional bias: pro residues. The segment covering 589-605 (TPAERVTVKPPDQRRSV) has biased composition (basic and acidic residues). Residues 700–801 (EQDRVLQDLE…LQEQHRRAFF (102 aa)) adopt a coiled-coil conformation. 2 disordered regions span residues 841-876 (RKTV…VRTP) and 888-971 (YVPY…ELGQ). Phosphoserine is present on residues Ser858, Ser860, and Ser867. Residues 861–871 (KPPPQPSPPTS) are compositionally biased toward pro residues. Thr870 is modified (phosphothreonine). A phosphoserine mark is found at Ser871, Ser903, and Ser907. Residues 933-942 (DQPPAVPPLP) show a composition bias toward pro residues. Residues 958–969 (RQSDERKRDREL) are compositionally biased toward basic and acidic residues. The residue at position 986 (Ser986) is a Phosphoserine. 2 disordered regions span residues 1003–1028 (GLVG…RLQQ) and 1082–1121 (RHQK…GSVC). A coiled-coil region spans residues 1067–1094 (QRGKMSAEEQLERMKRHQKALVRERKRT). The segment covering 1082–1094 (RHQKALVRERKRT) has biased composition (basic residues).

Interacts with CAMSAP3 and CTNND1. Interacts (via WW domains) with TSPAN33 (via cytoplasmic domain) and with PDZD11; the interaction with TSPAN33 is dependent on PDZD11 being bound to PLEKHA7 and facilitates the docking of ADAM10 to zonula adherens through interaction of TSPAN33 with ADAM10.

It is found in the cell junction. Its subcellular location is the adherens junction. It localises to the cytoplasm. The protein resides in the cytoskeleton. The protein localises to the microtubule organizing center. It is found in the centrosome. Functionally, required for zonula adherens biogenesis and maintenance. Acts via its interaction with CAMSAP3, which anchors microtubules at their minus-ends to zonula adherens, leading to the recruitment of KIFC3 kinesin to the junctional site. Mediates docking of ADAM10 to zonula adherens through a PDZD11-dependent interaction with the ADAM10-binding protein TSPAN33. In Homo sapiens (Human), this protein is Pleckstrin homology domain-containing family A member 7 (PLEKHA7).